A 91-amino-acid polypeptide reads, in one-letter code: Small membrane A-kinase anchor protein (91 aa).

A lipid anchor (N-myristoyl glycine) is attached at glycine 2.

Belongs to the small membrane AKAP family. May be palmitoylated at Cys-3.

The protein resides in the cell membrane. Its function is as follows. Binds to type I regulatory subunits of protein kinase A and may anchor/target them to the plasma membrane. The polypeptide is Small membrane A-kinase anchor protein (Xenopus tropicalis (Western clawed frog)).